The sequence spans 307 residues: NmrA-like family domain-containing oxidoreductase flvB (307 aa).

NADP(+) is bound by residues 4–9, 32–36, 53–54, 74–76, and 148–151; these read LITGAT, SSSSP, DY, STN, and YVEG.

This sequence belongs to the NmrA-type oxidoreductase family.

It carries out the reaction (2S)-5,5-dimethyl-2,3,4,5-tetrahydropyridine-2,6-dicarboxylate + NADPH + 2 H(+) = (6S)-3,3-dimethylpiperidine-2,6-dicarboxylate + NADP(+). The enzyme catalyses (2S)-5,5-dimethyl-2,3,4,5-tetrahydropyridine-2,6-dicarboxylate + NADH + 2 H(+) = (6S)-3,3-dimethylpiperidine-2,6-dicarboxylate + NAD(+). It functions in the pathway secondary metabolite biosynthesis; terpenoid biosynthesis. NmrA-like family domain-containing oxidoreductase; part of the gene cluster that mediates the biosynthesis of flavunoidine, an alkaloidal terpenoid with a tetracyclic cage-like core connected to dimethylcadaverine via a C-N bond and acylated with 5,5-dimethyl-L-pipecolate. The tetracyclic core is synthesized by the terpene cyclase flvE and the cytochrome P450 monooxygenase flvD. The terpene cyclase flvE catalyzes the cyclization of farnesyl pyrophosphate (FPP) to form (1R,4R,5S)-(+)-acoradiene and the cytochrome P450 monooxygenase flvD is then responsible for oxidative conversion of (1R,4R,5S)-(+)-acoradiene into the tetracyclic cage present in the final product flavunoidine. In parallel, the N-methyltransferase flvH dimethylates L-lysine to give N,N-dimethyl-L-Lysin which is decarboxylated by flvG to afford dimethylcadaverine. The terpene cyclase-like protein flvF is the enzyme that attaches the dimethylcadaverine precusor at the C-7 of the tetracyclic cage to yield pre-flavunoidine. The cytochrome monooxygenase flvC hydroxylates the C-10 position of pre-flavunoidine whereas the NRPS flvI acylates the terpenoid core at the hydroxylated C-10 with dimethylpipecolate to yield final flavunoidine. The bifunctional enzyme flvA and the dehydrogenase flvB are responsible for the synthesis of the dimethylpipecolate precursor. The PLP-dependent lyase domain of flvA might use L-O-acetyl-homoserine and alpha-keto-isovalerate to form an intermediary ketone that can cyclize intramolecularly to yield an imine. The imine can be reduced by flvB to yield the 6-carboxylated pipecolate. The C-terminal alpha-KG-dependent oxygenase domain of flvA is then proposed to catalyze the decarboxylation to yield dimethylpipecolate. The protein is NmrA-like family domain-containing oxidoreductase flvB of Aspergillus flavus (strain ATCC 200026 / FGSC A1120 / IAM 13836 / NRRL 3357 / JCM 12722 / SRRC 167).